The chain runs to 336 residues: Coproporphyrin III ferrochelatase (336 aa).

The Fe-coproporphyrin III site is built by serine 52 and tyrosine 116. Histidine 172 and glutamate 255 together coordinate Fe(2+).

This sequence belongs to the ferrochelatase family.

The protein resides in the cytoplasm. It carries out the reaction Fe-coproporphyrin III + 2 H(+) = coproporphyrin III + Fe(2+). It participates in porphyrin-containing compound metabolism; protoheme biosynthesis. Its function is as follows. Involved in coproporphyrin-dependent heme b biosynthesis. Catalyzes the insertion of ferrous iron into coproporphyrin III to form Fe-coproporphyrin III. In Mycobacterium avium (strain 104), this protein is Coproporphyrin III ferrochelatase.